We begin with the raw amino-acid sequence, 274 residues long: Thymidylate synthase (274 aa).

Residue arginine 21 coordinates dUMP. Residue histidine 51 coordinates (6R)-5,10-methylene-5,6,7,8-tetrahydrofolate. Arginine 123 to arginine 124 contributes to the dUMP binding site. Cysteine 156 acts as the Nucleophile in catalysis. DUMP contacts are provided by residues arginine 176–aspartate 179, asparagine 187, and histidine 217–tyrosine 219. (6R)-5,10-methylene-5,6,7,8-tetrahydrofolate is bound at residue aspartate 179. Alanine 273 provides a ligand contact to (6R)-5,10-methylene-5,6,7,8-tetrahydrofolate.

This sequence belongs to the thymidylate synthase family. Bacterial-type ThyA subfamily. As to quaternary structure, homodimer.

It is found in the cytoplasm. The enzyme catalyses dUMP + (6R)-5,10-methylene-5,6,7,8-tetrahydrofolate = 7,8-dihydrofolate + dTMP. Its pathway is pyrimidine metabolism; dTTP biosynthesis. Catalyzes the reductive methylation of 2'-deoxyuridine-5'-monophosphate (dUMP) to 2'-deoxythymidine-5'-monophosphate (dTMP) while utilizing 5,10-methylenetetrahydrofolate (mTHF) as the methyl donor and reductant in the reaction, yielding dihydrofolate (DHF) as a by-product. This enzymatic reaction provides an intracellular de novo source of dTMP, an essential precursor for DNA biosynthesis. The sequence is that of Thymidylate synthase from Christiangramia forsetii (strain DSM 17595 / CGMCC 1.15422 / KT0803) (Gramella forsetii).